The following is a 174-amino-acid chain: Co-chaperone protein HscB (174 aa).

Residues 2-74 enclose the J domain; it reads DYFTLFGLPA…LKRAEYMLSL (73 aa).

The protein belongs to the HscB family. Interacts with HscA and stimulates its ATPase activity. Interacts with IscU.

Functionally, co-chaperone involved in the maturation of iron-sulfur cluster-containing proteins. Seems to help targeting proteins to be folded toward HscA. This is Co-chaperone protein HscB from Yersinia pseudotuberculosis serotype O:1b (strain IP 31758).